The chain runs to 397 residues: Phosphoglycerate kinase (397 aa).

Substrate is bound by residues D21–N23, R37, H60–R63, R119, and R152. ATP contacts are provided by residues K203, G294, E325, and G354–S357.

Belongs to the phosphoglycerate kinase family. As to quaternary structure, monomer.

The protein localises to the cytoplasm. It carries out the reaction (2R)-3-phosphoglycerate + ATP = (2R)-3-phospho-glyceroyl phosphate + ADP. Its pathway is carbohydrate degradation; glycolysis; pyruvate from D-glyceraldehyde 3-phosphate: step 2/5. The sequence is that of Phosphoglycerate kinase from Chlorobium chlorochromatii (strain CaD3).